The following is a 193-amino-acid chain: Ion-translocating oxidoreductase complex subunit A (193 aa).

6 helical membrane passes run 5 to 25, 39 to 59, 62 to 82, 102 to 122, 134 to 154, and 171 to 191; these read FLLF…FLGL, IGMG…SWLV, FILL…LVIA, LLGI…VALL, AIYG…FAAI, and SIGL…SGLV.

The protein belongs to the NqrDE/RnfAE family. The complex is composed of six subunits: RnfA, RnfB, RnfC, RnfD, RnfE and RnfG.

It is found in the cell inner membrane. Functionally, part of a membrane-bound complex that couples electron transfer with translocation of ions across the membrane. This Photorhabdus laumondii subsp. laumondii (strain DSM 15139 / CIP 105565 / TT01) (Photorhabdus luminescens subsp. laumondii) protein is Ion-translocating oxidoreductase complex subunit A.